A 370-amino-acid polypeptide reads, in one-letter code: 3-dehydroquinate synthase (370 aa).

NAD(+) contacts are provided by residues 108–112, 132–133, K145, and K154; these read GVIGD and TT. Zn(2+) contacts are provided by E187, H249, and H267.

Belongs to the sugar phosphate cyclases superfamily. Dehydroquinate synthase family. Requires Co(2+) as cofactor. Zn(2+) is required as a cofactor. It depends on NAD(+) as a cofactor.

The protein localises to the cytoplasm. It catalyses the reaction 7-phospho-2-dehydro-3-deoxy-D-arabino-heptonate = 3-dehydroquinate + phosphate. Its pathway is metabolic intermediate biosynthesis; chorismate biosynthesis; chorismate from D-erythrose 4-phosphate and phosphoenolpyruvate: step 2/7. In terms of biological role, catalyzes the conversion of 3-deoxy-D-arabino-heptulosonate 7-phosphate (DAHP) to dehydroquinate (DHQ). The protein is 3-dehydroquinate synthase of Cereibacter sphaeroides (strain ATCC 17023 / DSM 158 / JCM 6121 / CCUG 31486 / LMG 2827 / NBRC 12203 / NCIMB 8253 / ATH 2.4.1.) (Rhodobacter sphaeroides).